Reading from the N-terminus, the 264-residue chain is Thiazole synthase (264 aa).

Lysine 106 acts as the Schiff-base intermediate with DXP in catalysis. Residues glycine 167, 193–194, and 215–216 contribute to the 1-deoxy-D-xylulose 5-phosphate site; these read AG and NS.

This sequence belongs to the ThiG family. Homotetramer. Forms heterodimers with either ThiH or ThiS.

It localises to the cytoplasm. The catalysed reaction is [ThiS sulfur-carrier protein]-C-terminal-Gly-aminoethanethioate + 2-iminoacetate + 1-deoxy-D-xylulose 5-phosphate = [ThiS sulfur-carrier protein]-C-terminal Gly-Gly + 2-[(2R,5Z)-2-carboxy-4-methylthiazol-5(2H)-ylidene]ethyl phosphate + 2 H2O + H(+). The protein operates within cofactor biosynthesis; thiamine diphosphate biosynthesis. In terms of biological role, catalyzes the rearrangement of 1-deoxy-D-xylulose 5-phosphate (DXP) to produce the thiazole phosphate moiety of thiamine. Sulfur is provided by the thiocarboxylate moiety of the carrier protein ThiS. In vitro, sulfur can be provided by H(2)S. The polypeptide is Thiazole synthase (Pseudomonas fluorescens (strain SBW25)).